A 305-amino-acid chain; its full sequence is Serine/threonine-protein phosphatase PP1-delta (305 aa).

Residues Asp62, His64, Asp90, and Asn122 each coordinate Mn(2+). Residue His123 is the Proton donor of the active site. Residues His172 and His247 each coordinate Mn(2+).

It belongs to the PPP phosphatase family. Expressed in male germline including spermatocytes, spermatids and spermatozoa.

It is found in the chromosome. The protein resides in the cell projection. It localises to the pseudopodium. The protein localises to the cytoplasm. The enzyme catalyses O-phospho-L-seryl-[protein] + H2O = L-seryl-[protein] + phosphate. It carries out the reaction O-phospho-L-threonyl-[protein] + H2O = L-threonyl-[protein] + phosphate. Functionally, probable phosphatase which plays a redundant role with gsp-4 in spermatogenesis by regulating sister chromatid segregation during meiosis. In addition, involved in sperm motility by controlling the dynamic disassembly of major sperm proteins (MSP) in the spermatozoan pseudopodium. This is Serine/threonine-protein phosphatase PP1-delta from Caenorhabditis elegans.